The sequence spans 185 residues: Elongation factor P (185 aa).

Belongs to the elongation factor P family.

The protein resides in the cytoplasm. It participates in protein biosynthesis; polypeptide chain elongation. Its function is as follows. Involved in peptide bond synthesis. Stimulates efficient translation and peptide-bond synthesis on native or reconstituted 70S ribosomes in vitro. Probably functions indirectly by altering the affinity of the ribosome for aminoacyl-tRNA, thus increasing their reactivity as acceptors for peptidyl transferase. This Desulfitobacterium hafniense (strain Y51) protein is Elongation factor P.